The sequence spans 122 residues: Large ribosomal subunit protein bL12 (122 aa).

The protein belongs to the bacterial ribosomal protein bL12 family. As to quaternary structure, homodimer. Part of the ribosomal stalk of the 50S ribosomal subunit. Forms a multimeric L10(L12)X complex, where L10 forms an elongated spine to which 2 to 4 L12 dimers bind in a sequential fashion. Binds GTP-bound translation factors.

Forms part of the ribosomal stalk which helps the ribosome interact with GTP-bound translation factors. Is thus essential for accurate translation. The protein is Large ribosomal subunit protein bL12 of Shewanella woodyi (strain ATCC 51908 / MS32).